A 71-amino-acid polypeptide reads, in one-letter code: Vitellogenin-B1 (71 aa).

Residues Met1 to Ser15 form the signal peptide. A Vitellogenin domain is found at Phe24–Lys71.

Produced by the liver, secreted into the blood and then sequestered by receptor mediated endocytosis into growing oocytes, where it is generally cleaved, giving rise to the respective yolk components.

Its function is as follows. Precursor of the major egg-yolk proteins that are sources of nutrients during early development of oviparous organisms. The protein is Vitellogenin-B1 of Xenopus laevis (African clawed frog).